A 23-amino-acid chain; its full sequence is Paralytic peptide 2 (23 aa).

A disulfide bond links Cys-7 and Cys-19.

This sequence belongs to the GBP/PSP1/paralytic peptide family. In terms of tissue distribution, hemolymph.

Functionally, causes rapid, rigid paralysis when injected into Lepidopteran larvae. The physiological role may be to reduce hemolymph loss following injury and promote wound healing. The sequence is that of Paralytic peptide 2 from Manduca sexta (Tobacco hawkmoth).